The sequence spans 259 residues: tRNA (guanine-N(7)-)-methyltransferase (259 aa).

A disordered region spans residues 1 to 74 (MGHHGQMHAQ…PAEDPDRPGP (74 aa)). The S-adenosyl-L-methionine site is built by Glu-91, Glu-116, Asn-143, and Asp-166. The active site involves Asp-166. Residues Lys-170, Asp-202, and 238–241 (TKYE) each bind substrate.

Belongs to the class I-like SAM-binding methyltransferase superfamily. TrmB family.

The enzyme catalyses guanosine(46) in tRNA + S-adenosyl-L-methionine = N(7)-methylguanosine(46) in tRNA + S-adenosyl-L-homocysteine. It functions in the pathway tRNA modification; N(7)-methylguanine-tRNA biosynthesis. Functionally, catalyzes the formation of N(7)-methylguanine at position 46 (m7G46) in tRNA. This is tRNA (guanine-N(7)-)-methyltransferase from Mycobacterium avium (strain 104).